A 662-amino-acid polypeptide reads, in one-letter code: Biosynthetic arginine decarboxylase (662 aa).

Residue Lys126 is modified to N6-(pyridoxal phosphate)lysine. 308 to 318 (LNVGGGLGVDY) lines the substrate pocket.

This sequence belongs to the Orn/Lys/Arg decarboxylase class-II family. SpeA subfamily. It depends on Mg(2+) as a cofactor. Pyridoxal 5'-phosphate is required as a cofactor.

It catalyses the reaction L-arginine + H(+) = agmatine + CO2. Catalyzes the biosynthesis of agmatine from arginine. The sequence is that of Biosynthetic arginine decarboxylase from Deinococcus radiodurans (strain ATCC 13939 / DSM 20539 / JCM 16871 / CCUG 27074 / LMG 4051 / NBRC 15346 / NCIMB 9279 / VKM B-1422 / R1).